A 618-amino-acid polypeptide reads, in one-letter code: Sphingomyelin phosphodiesterase 2 (618 aa).

Positions 1–22 are cleaved as a signal peptide; sequence MQQPLIILGIGIVLALVSNVES. Residues 68–151 enclose the Saposin B-type domain; sequence RKMSCLFCTF…AFIANCGHSD (84 aa). Intrachain disulfides connect C72-C147, C75-C140, and C103-C114. The N-linked (GlcNAc...) asparagine glycan is linked to N89. N-linked (GlcNAc...) asparagine glycosylation occurs at N159. Positions 189 and 191 each coordinate Zn(2+). 2 disulfides stabilise this stretch: C204–C216 and C217–C249. Zn(2+) is bound at residue D278. The N-linked (GlcNAc...) asparagine glycan is linked to N298. Positions 318, 427, 461, and 463 each coordinate Zn(2+). C387 and C435 are joined by a disulfide. N-linked (GlcNAc...) asparagine glycosylation is found at N525 and N568. Intrachain disulfides connect C588–C594 and C600–C613.

This sequence belongs to the acid sphingomyelinase family. Zn(2+) is required as a cofactor.

The protein localises to the secreted. It catalyses the reaction a sphingomyelin + H2O = phosphocholine + an N-acylsphing-4-enine + H(+). The enzyme catalyses an N-acyl-15-methylhexadecasphing-4-enine-1-phosphocholine + H2O = an N-acyl-15-methylhexadecasphing-4-enine + phosphocholine + H(+). It functions in the pathway lipid metabolism; sphingolipid metabolism. In terms of biological role, sphingomyelin phosphodiesterase (sphingomyelinase) that converts sphingomyelin (N-acyl-sphingoid-1-phosphocholine) to ceramide (N-acyl-sphingoid base) and phosphocholine at acidic pH. Displays its enzymatic activity when secreted. May play distinct roles in signaling. The chain is Sphingomyelin phosphodiesterase 2 (asm-2) from Caenorhabditis elegans.